A 224-amino-acid chain; its full sequence is Small ribosomal subunit protein uS3c (224 aa).

Residues 43-124 (IKNYIQKNRK…RLNIAIEKVK (82 aa)) form the KH type-2 domain.

The protein belongs to the universal ribosomal protein uS3 family. Part of the 30S ribosomal subunit.

It is found in the plastid. The protein localises to the chloroplast. This Saccharum hybrid (Sugarcane) protein is Small ribosomal subunit protein uS3c (rps3).